A 580-amino-acid chain; its full sequence is Lysine--tRNA ligase (580 aa).

The 'HIGH' region signature appears at Pro-43–Asn-51. The disordered stretch occupies residues Lys-178 to Ser-209. Positions Ala-196–Ser-209 are enriched in low complexity. Residues Lys-325 to Ser-329 carry the 'KMSKS' region motif.

The protein belongs to the class-I aminoacyl-tRNA synthetase family.

The protein resides in the cytoplasm. The enzyme catalyses tRNA(Lys) + L-lysine + ATP = L-lysyl-tRNA(Lys) + AMP + diphosphate. The sequence is that of Lysine--tRNA ligase (lysS) from Streptomyces coelicolor (strain ATCC BAA-471 / A3(2) / M145).